Reading from the N-terminus, the 31-residue chain is Ranatuerin-2 (31 aa).

An intrachain disulfide couples cysteine 23 to cysteine 28.

The protein belongs to the frog skin active peptide (FSAP) family. Ranatuerin subfamily. As to expression, expressed by the skin glands.

The protein resides in the secreted. Antibacterial activity against Gram-positive bacterium S.aureus (MIC=60 uM). Shows no detectable hemolytic activity towards human erythrocytes. The sequence is that of Ranatuerin-2 from Aquarana catesbeiana (American bullfrog).